A 164-amino-acid chain; its full sequence is Ecotin (164 aa).

The first 20 residues, 1–20, serve as a signal peptide directing secretion; that stretch reads MKMFVPAVVFAALASASAWA. An intrachain disulfide couples Cys72 to Cys109.

Belongs to the protease inhibitor I11 (ecotin) family. As to quaternary structure, homodimer.

It is found in the periplasm. General inhibitor of pancreatic serine proteases: inhibits chymotrypsin, trypsin, elastases, factor X, kallikrein as well as a variety of other proteases. The chain is Ecotin from Salmonella paratyphi A (strain ATCC 9150 / SARB42).